A 510-amino-acid chain; its full sequence is Serine/threonine-protein kinase UL13 homolog (510 aa).

Residues 1–63 form a disordered region; it reads MDADDTPPNL…WANPSTATCM (63 aa). In terms of domain architecture, Protein kinase spans 132 to 458; the sequence is RDRPRFAGRG…RRIFQCHAVR (327 aa). Residues 138–146 and lysine 157 contribute to the ATP site; that span reads AGRGTYGRV. Aspartate 257 functions as the Proton acceptor in the catalytic mechanism.

This sequence belongs to the protein kinase superfamily. Ser/Thr protein kinase family. Autophosphorylated.

It localises to the virion tegument. It is found in the host nucleus. It carries out the reaction L-seryl-[protein] + ATP = O-phospho-L-seryl-[protein] + ADP + H(+). The catalysed reaction is L-threonyl-[protein] + ATP = O-phospho-L-threonyl-[protein] + ADP + H(+). Multifunctional serine/threonine kinase that plays a role in several processes including egress of virus particles from the nucleus, modulation of the actin cytoskeleton and regulation of viral and cellular gene expression. Regulates the nuclear localization of viral envelopment factor proteins 24 and 27, by phosphorylating the protein kinase ORF66, indicating a role in nuclear egress. Disrupts host nuclear lamins, including LMNA and LMNB1. Phosphorylates the viral Fc receptor composed of glycoproteins E (gE) and I (gI). Phosphorylation of glycoprotein E (gE) by UL13 alters its subcellular localization, from the host early endosome to the plasma membrane. Participates in the transcriptional regulation of cellular and viral mRNAs mainly by phosphorylating the viral transcriptional regulator IE63. The protein is Serine/threonine-protein kinase UL13 homolog of Varicella-zoster virus (strain Dumas) (HHV-3).